The following is a 117-amino-acid chain: MDKKQARLRRARKTRARIAELKMARLSVHRTNCHIYAQIIDETGSRVLAQASTLEAEVKKELANGGNAGAAALIGKRIAEKAKAAGVEKVAFDRSGFQYHGRIKALADAARENGLAF.

This sequence belongs to the universal ribosomal protein uL18 family. As to quaternary structure, part of the 50S ribosomal subunit; part of the 5S rRNA/L5/L18/L25 subcomplex. Contacts the 5S and 23S rRNAs.

Its function is as follows. This is one of the proteins that bind and probably mediate the attachment of the 5S RNA into the large ribosomal subunit, where it forms part of the central protuberance. This is Large ribosomal subunit protein uL18 from Laribacter hongkongensis (strain HLHK9).